We begin with the raw amino-acid sequence, 348 residues long: Anthranilate phosphoribosyltransferase (348 aa).

5-phospho-alpha-D-ribose 1-diphosphate-binding positions include G81, 84–85 (GD), 91–94 (NVST), 109–117 (KHGNRAVSG), and S121. Residue G81 participates in anthranilate binding. S93 is a binding site for Mg(2+). Anthranilate is bound at residue N112. Position 167 (R167) interacts with anthranilate. Mg(2+)-binding residues include D226 and E227.

It belongs to the anthranilate phosphoribosyltransferase family. As to quaternary structure, homodimer. Mg(2+) serves as cofactor.

It carries out the reaction N-(5-phospho-beta-D-ribosyl)anthranilate + diphosphate = 5-phospho-alpha-D-ribose 1-diphosphate + anthranilate. It participates in amino-acid biosynthesis; L-tryptophan biosynthesis; L-tryptophan from chorismate: step 2/5. Catalyzes the transfer of the phosphoribosyl group of 5-phosphorylribose-1-pyrophosphate (PRPP) to anthranilate to yield N-(5'-phosphoribosyl)-anthranilate (PRA). This is Anthranilate phosphoribosyltransferase from Stutzerimonas stutzeri (strain A1501) (Pseudomonas stutzeri).